The sequence spans 463 residues: Bifunctional protein GlmU (463 aa).

The tract at residues 1–233 is pyrophosphorylase; the sequence is MSKKSTFIIL…NFEVMGINSR (233 aa). UDP-N-acetyl-alpha-D-glucosamine is bound by residues 10-13, lysine 24, glutamine 76, 81-82, 104-106, glycine 143, glutamate 158, asparagine 173, and asparagine 231; these read LAAG, GT, and YGD. Aspartate 106 lines the Mg(2+) pocket. A Mg(2+)-binding site is contributed by asparagine 231. The tract at residues 234–254 is linker; that stretch reads YELFVAEQELKLRINKEHLSK. Residues 255–463 form an N-acetyltransferase region; that stretch reads GVQIIDIYST…LRRKQMYENR (209 aa). 2 residues coordinate UDP-N-acetyl-alpha-D-glucosamine: arginine 336 and lysine 354. Histidine 366 serves as the catalytic Proton acceptor. UDP-N-acetyl-alpha-D-glucosamine is bound by residues tyrosine 369 and asparagine 380. Residues 389–390, alanine 426, and arginine 443 each bind acetyl-CoA; that span reads NY.

In the N-terminal section; belongs to the N-acetylglucosamine-1-phosphate uridyltransferase family. This sequence in the C-terminal section; belongs to the transferase hexapeptide repeat family. As to quaternary structure, homotrimer. It depends on Mg(2+) as a cofactor.

It localises to the cytoplasm. The catalysed reaction is alpha-D-glucosamine 1-phosphate + acetyl-CoA = N-acetyl-alpha-D-glucosamine 1-phosphate + CoA + H(+). It carries out the reaction N-acetyl-alpha-D-glucosamine 1-phosphate + UTP + H(+) = UDP-N-acetyl-alpha-D-glucosamine + diphosphate. It functions in the pathway nucleotide-sugar biosynthesis; UDP-N-acetyl-alpha-D-glucosamine biosynthesis; N-acetyl-alpha-D-glucosamine 1-phosphate from alpha-D-glucosamine 6-phosphate (route II): step 2/2. It participates in nucleotide-sugar biosynthesis; UDP-N-acetyl-alpha-D-glucosamine biosynthesis; UDP-N-acetyl-alpha-D-glucosamine from N-acetyl-alpha-D-glucosamine 1-phosphate: step 1/1. The protein operates within bacterial outer membrane biogenesis; LPS lipid A biosynthesis. In terms of biological role, catalyzes the last two sequential reactions in the de novo biosynthetic pathway for UDP-N-acetylglucosamine (UDP-GlcNAc). The C-terminal domain catalyzes the transfer of acetyl group from acetyl coenzyme A to glucosamine-1-phosphate (GlcN-1-P) to produce N-acetylglucosamine-1-phosphate (GlcNAc-1-P), which is converted into UDP-GlcNAc by the transfer of uridine 5-monophosphate (from uridine 5-triphosphate), a reaction catalyzed by the N-terminal domain. The protein is Bifunctional protein GlmU of Caldicellulosiruptor saccharolyticus (strain ATCC 43494 / DSM 8903 / Tp8T 6331).